The primary structure comprises 118 residues: AESKPAESEHELAEVEEENELADLEDAVWLEHLADLSDLEEARGFFGNTWKKIKGKADKIMLKKAVKLMVKKEGISKEEAQAKVDAMSKKQIRLYLLKYYGKKSSSKSVRKIVISKSF.

Residues 1-3 (AES) form the signal peptide. The propeptide occupies 4-43 (KPAESEHELAEVEEENELADLEDAVWLEHLADLSDLEEAR).

It belongs to the cationic peptide 06 (cytoinsectotoxin) family. As to expression, expressed by the venom gland.

The protein resides in the secreted. Its function is as follows. Insecticidal, cytolytic and antimicrobial peptide. Forms voltage-dependent, ion-permeable channels in membranes. At high concentration causes cell membrane lysis. This chain is M-zodatoxin-Lt8p (cit 1-15), found in Lachesana tarabaevi (Spider).